The following is a 95-amino-acid chain: Osteocalcin-related protein (95 aa).

A signal peptide spans 1-23 (MRTLSLLTLLALAALCLSDLTDA). The propeptide occupies 24–49 (TPTGPESDKAFMSKQEGNKVVNRLRR). Residues 46 to 92 (RLRRYLGASVPSPDPLEPTRELCELDPACDELSNQYGLKTAYRRIYG) form the Gla domain. Ca(2+) contacts are provided by Glu-62, Glu-66, Glu-69, and Asp-75. 2 positions are modified to 4-carboxyglutamate: Glu-66 and Glu-69. Cysteines 68 and 74 form a disulfide.

This sequence belongs to the osteocalcin/matrix Gla protein family. Gamma-carboxyglutamic acid residues are formed by vitamin K dependent carboxylation. These residues are essential for the binding of calcium. As to expression, expressed in kidney and lung, but not in bone.

The protein localises to the secreted. In terms of biological role, binds strongly to apatite and calcium. In Mus musculus (Mouse), this protein is Osteocalcin-related protein.